Here is a 519-residue protein sequence, read N- to C-terminus: MDRLHHPQLQTLVQTTSFHAQHEPTTPAVLCEGRTLTYEQLHRESNRIAHALKAAGLAPGDRVAYLGKESEHYYEILFGCAKSGTVLVPVNWRLTAPEVSHILQDSGTRLLFLEDEFGPVVEKMPAAPPETIVALGESFAAWKASHLDTDPKPHDVTPDTPVAQLYTSGTTGLPKGVVLAHRSFFAIRDALASEGLDWIDWRVGDIALIGIPGFHIGGLWWATQNFNAGTTVVAMRAFAARQAVDLIRDLGITTACVVPAMLRMMLTEPGVGAKDFTTLRKTVYGGSPISEALLEESLAVLDCEFAQIYGLTETGNTAVCLPPAAHVPGGSLMQAAGHPYPGVRSKVIDGEGRELPPGAVGEVCLATPARMVEYWGLPDKTAETLVDGWIHTGDAGYVDEDGYVFIRDRIKDAILVAGENVYPAEIENVLEGHPGVAEAVVVGAPDERWGEYVHAFVVAAPGQQPSPRDLHTFLVPQLASFKLPARYEFIDSVPRNPSGKILRRELRDRFWGDSARKVN.

Residue Thr167 participates in Mg(2+) binding. Residues Ile216 and Thr312 each coordinate ATP. Glu313 provides a ligand contact to Mg(2+). 2 residues coordinate ATP: Asp394 and Lys411.

This sequence belongs to the ATP-dependent AMP-binding enzyme family. Requires Mg(2+) as cofactor.

It catalyses the reaction a medium-chain fatty acid + holo-[ACP] + ATP = a medium-chain fatty acyl-[ACP] + AMP + diphosphate. It carries out the reaction a medium-chain fatty acid + ATP + H(+) = a medium-chain fatty acyl-AMP + diphosphate. The enzyme catalyses a medium-chain fatty acyl-AMP + holo-[ACP] = a medium-chain fatty acyl-[ACP] + AMP + H(+). The catalysed reaction is octanoate + holo-[ACP] + ATP = octanoyl-[ACP] + AMP + diphosphate. It catalyses the reaction octanoate + ATP + H(+) = octanoyl-AMP + diphosphate. It carries out the reaction octanoyl-AMP + holo-[ACP] = octanoyl-[ACP] + AMP + H(+). The enzyme catalyses a (2E)-enoyl fatty acid + holo-[ACP] + ATP = a (2E)-enoyl-[ACP] + AMP + diphosphate. The catalysed reaction is a (2E)-enoyl fatty acid + ATP + H(+) = a (2E)-2-fatty-enoyl-AMP + diphosphate. It catalyses the reaction a (2E)-2-fatty-enoyl-AMP + holo-[ACP] = a (2E)-enoyl-[ACP] + AMP + H(+). It carries out the reaction (2E)-2-butenoate + holo-[ACP] + ATP = (2E)-butenoyl-[ACP] + AMP + diphosphate. The enzyme catalyses (2E)-2-butenoate + ATP + H(+) = (2E)-but-2-enoyl-AMP + diphosphate. The catalysed reaction is (2E)-but-2-enoyl-AMP + holo-[ACP] = (2E)-butenoyl-[ACP] + AMP + H(+). It catalyses the reaction a (3R)-3-isocyanyl-fatty acid + holo-[ACP] + ATP = a (3R)-3-isocyanyl-fatty acyl-[ACP] + AMP + diphosphate. It carries out the reaction a (3R)-3-isocyanyl-fatty acid + ATP + H(+) = a (3R)-3-isocyanyl-fatty acyl-AMP + diphosphate. The enzyme catalyses a (3R)-3-isocyanyl-fatty acyl-AMP + holo-[ACP] = a (3R)-3-isocyanyl-fatty acyl-[ACP] + AMP + H(+). The catalysed reaction is (3R)-3-isocyanylbutanoate + holo-[ACP] + ATP = (3R)-3-isocyanylbutanoyl-[ACP] + AMP + diphosphate. It catalyses the reaction (3R)-3-isocyanylbutanoate + ATP + H(+) = (3R)-3-isocyanylbutanoyl-AMP + diphosphate. It carries out the reaction (3R)-3-isocyanylbutanoyl-AMP + holo-[ACP] = (3R)-3-isocyanylbutanoyl-[ACP] + AMP + H(+). Acyl:acyl-carrier protein ligase involved in the biosynthesis of a unique class of isonitrile lipopeptides (INLPs). Shows a strong preference for fatty acids with a short/medium-chain length (C4-C8) in vitro, and accepts alpha,beta-unsaturated fatty acids such as crotonate, which seems to be a physiological substrate. Acts twice during the INLP pathway, catalyzing the activation of crotonate ((2E)-2-butenoate) as well as (3R)-3-isocyanylbutanoate as acyl-adenylates (acyl-AMP), and then the acyl transfer to the dedicated acyl-carrier protein ScoB. In Streptomyces coeruleorubidus, this protein is Fatty acid--[acyl-carrier-protein] ligase ScoC.